The chain runs to 174 residues: Shikimate kinase 2 (174 aa).

Position 12-17 (12-17 (GAGKTT)) interacts with ATP. Mg(2+) is bound by residues T16 and D32. D34, R58, and G79 together coordinate substrate. Residues 112-126 (AEDPEEAQRPSLTGK) form an LID domain region. Residue R120 coordinates ATP. R139 provides a ligand contact to substrate. ATP is bound at residue Q155.

Belongs to the shikimate kinase family. AroL subfamily. As to quaternary structure, monomer. Mg(2+) serves as cofactor.

The protein resides in the cytoplasm. The catalysed reaction is shikimate + ATP = 3-phosphoshikimate + ADP + H(+). Its pathway is metabolic intermediate biosynthesis; chorismate biosynthesis; chorismate from D-erythrose 4-phosphate and phosphoenolpyruvate: step 5/7. Its function is as follows. Catalyzes the specific phosphorylation of the 3-hydroxyl group of shikimic acid using ATP as a cosubstrate. The sequence is that of Shikimate kinase 2 from Yersinia pseudotuberculosis serotype IB (strain PB1/+).